Consider the following 448-residue polypeptide: RNA-binding protein 42 (448 aa).

Residues 1-29 are disordered; the sequence is MAGAGPAPGLPGAGGPVVPGPGAGIPGKS. Position 2 is an N-acetylalanine (Ala-2). Gly residues predominate over residues 11–27; that stretch reads PGAGGPVVPGPGAGIPG. At Ser-132 the chain carries Phosphoserine. Asymmetric dimethylarginine is present on Arg-149. Residues 204 to 448 form a necessary for interaction with HNRNPK region; sequence ELGLGLGLGL…QKEKKKLGLR (245 aa). A disordered region spans residues 286–324; sequence LSLRPRPRPPRPEPPPGLMALEVPEPLSEDKKKGKPEKL. Residues 313-324 are compositionally biased toward basic and acidic residues; it reads SEDKKKGKPEKL. Residues 349 to 427 form the RRM domain; it reads FRIFCGDLGN…RPIKLRKSMW (79 aa).

This sequence belongs to the RRM RBM42 family. In terms of assembly, interacts with HNRNPK.

It is found in the nucleus. It localises to the cytoplasm. In terms of biological role, binds (via the RRM domain) to the 3'-untranslated region (UTR) of CDKN1A mRNA. The protein is RNA-binding protein 42 (RBM42) of Bos taurus (Bovine).